Reading from the N-terminus, the 306-residue chain is N-acetylmuramic acid 6-phosphate etherase (306 aa).

The SIS domain occupies 59–222 (TAQALGRGGR…STGVMVCLGK (164 aa)). Glu-87 (proton donor) is an active-site residue. The active site involves Glu-118.

Belongs to the GCKR-like family. MurNAc-6-P etherase subfamily. In terms of assembly, homodimer.

The catalysed reaction is N-acetyl-D-muramate 6-phosphate + H2O = N-acetyl-D-glucosamine 6-phosphate + (R)-lactate. Its pathway is amino-sugar metabolism; N-acetylmuramate degradation. Specifically catalyzes the cleavage of the D-lactyl ether substituent of MurNAc 6-phosphate, producing GlcNAc 6-phosphate and D-lactate. This is N-acetylmuramic acid 6-phosphate etherase from Rippkaea orientalis (strain PCC 8801 / RF-1) (Cyanothece sp. (strain PCC 8801)).